Consider the following 158-residue polypeptide: SsrA-binding protein (158 aa).

It belongs to the SmpB family.

The protein localises to the cytoplasm. In terms of biological role, required for rescue of stalled ribosomes mediated by trans-translation. Binds to transfer-messenger RNA (tmRNA), required for stable association of tmRNA with ribosomes. tmRNA and SmpB together mimic tRNA shape, replacing the anticodon stem-loop with SmpB. tmRNA is encoded by the ssrA gene; the 2 termini fold to resemble tRNA(Ala) and it encodes a 'tag peptide', a short internal open reading frame. During trans-translation Ala-aminoacylated tmRNA acts like a tRNA, entering the A-site of stalled ribosomes, displacing the stalled mRNA. The ribosome then switches to translate the ORF on the tmRNA; the nascent peptide is terminated with the 'tag peptide' encoded by the tmRNA and targeted for degradation. The ribosome is freed to recommence translation, which seems to be the essential function of trans-translation. This chain is SsrA-binding protein, found in Caldicellulosiruptor saccharolyticus (strain ATCC 43494 / DSM 8903 / Tp8T 6331).